The following is a 59-amino-acid chain: Ferredoxin (59 aa).

4Fe-4S ferredoxin-type domains are found at residues 2-30 (GKITIVNIDDCVACGACSGTCPQSVLEVN) and 31-59 (DHVEIKNPDDCIGCGACVDACPQGVLKVE). [4Fe-4S] cluster-binding residues include C12, C15, C18, C22, C41, C44, C47, and C51.

[4Fe-4S] cluster is required as a cofactor.

Its function is as follows. Ferredoxins are iron-sulfur proteins that transfer electrons in a wide variety of metabolic reactions. This chain is Ferredoxin, found in Entamoeba histolytica (strain ATCC 30459 / HM-1:IMSS / ABRM).